The chain runs to 558 residues: CTP synthase (558 aa).

An amidoligase domain region spans residues 1–267; it reads MAKFVFVTGG…CLEMLDVLNL (267 aa). Ser13 lines the CTP pocket. Ser13 contacts UTP. ATP is bound by residues 14–19 and Asp71; that span reads SIGKGI. Mg(2+) contacts are provided by Asp71 and Glu141. Residues 148–150, 188–193, and Lys224 each bind CTP; these read DIE and KTKPTQ. UTP contacts are provided by residues 188–193 and Lys224; that span reads KTKPTQ. Residues 292 to 534 form the Glutamine amidotransferase type-1 domain; the sequence is KVALVGKYVQ…IEAAQLRLPA (243 aa). Gly354 serves as a coordination point for L-glutamine. Cys381 (nucleophile; for glutamine hydrolysis) is an active-site residue. L-glutamine-binding positions include 382–385, Glu405, and Arg462; that span reads LGMQ. Catalysis depends on residues His507 and Glu509. The disordered stretch occupies residues 536 to 558; it reads PDEALRRQSQTNISAQEQPSRIG. Over residues 542 to 558 the composition is skewed to polar residues; the sequence is RQSQTNISAQEQPSRIG.

This sequence belongs to the CTP synthase family. In terms of assembly, homotetramer.

The enzyme catalyses UTP + L-glutamine + ATP + H2O = CTP + L-glutamate + ADP + phosphate + 2 H(+). It carries out the reaction L-glutamine + H2O = L-glutamate + NH4(+). The catalysed reaction is UTP + NH4(+) + ATP = CTP + ADP + phosphate + 2 H(+). Its pathway is pyrimidine metabolism; CTP biosynthesis via de novo pathway; CTP from UDP: step 2/2. With respect to regulation, allosterically activated by GTP, when glutamine is the substrate; GTP has no effect on the reaction when ammonia is the substrate. The allosteric effector GTP functions by stabilizing the protein conformation that binds the tetrahedral intermediate(s) formed during glutamine hydrolysis. Inhibited by the product CTP, via allosteric rather than competitive inhibition. In terms of biological role, catalyzes the ATP-dependent amination of UTP to CTP with either L-glutamine or ammonia as the source of nitrogen. Regulates intracellular CTP levels through interactions with the four ribonucleotide triphosphates. This is CTP synthase from Prochlorococcus marinus (strain MIT 9313).